The primary structure comprises 482 residues: Ras GTPase-activating protein-binding protein 2 (482 aa).

Residues 11 to 133 enclose the NTF2 domain; that stretch reads VGREFVRQYY…FYVHNDMFRY (123 aa). Residues 140-158 are compositionally biased toward acidic residues; that stretch reads DSEPELDEESEDEVEEEQE. Disordered stretches follow at residues 140-170 and 187-318; these read DSEPELDEESEDEVEEEQEDRQPSPEPVQEN and EPLE…EQND. Phosphoserine is present on residues Ser-141, Ser-149, and Ser-225. The interval 142 to 220 is acidic disordered region; that stretch reads EPELDEESED…PQVEEKHLEE (79 aa). Positions 191–225 are enriched in basic and acidic residues; that stretch reads ESSHEPEPEPESETKTEELKPQVEEKHLEELEEKS. At Thr-227 the chain carries Phosphothreonine. Over residues 247–264 the composition is skewed to polar residues; the sequence is ASVTSKNLPPSGTVSSSG. A Glycyl lysine isopeptide (Lys-Gly) (interchain with G-Cter in SUMO2) cross-link involves residue Lys-281. The span at 290–300 shows a compositional bias: basic and acidic residues; the sequence is RVREQRPRERP. Positions 331–409 constitute an RRM domain; the sequence is HQLFVGNLPH…VRLNVEEKKT (79 aa). An N6-succinyllysine modification is found at Lys-392. The segment at 404 to 476 is RG-rich region; the sequence is VEEKKTRAAR…GRGTGQMEGR (73 aa). A compositionally biased stretch (basic and acidic residues) spans 408–432; sequence KTRAARERETRGGGDDRRDIRRNDR. Positions 408-482 are disordered; sequence KTRAARERET…MEGRFTGQRR (75 aa). The span at 433–445 shows a compositional bias: gly residues; it reads GPGGPRGIVGGGM. Residue Arg-457 is modified to Omega-N-methylarginine. Ser-466 is subject to Phosphoserine. The residue at position 468 (Arg-468) is an Omega-N-methylarginine.

Forms homooligomers. Forms heterodimers with G3BP1. Interacts with NFKBIA (via N-terminus). Interacts (via NTF2 domain) with USP10; inhibiting stress granule formation. Interacts (via NTF2 domain) with CAPRIN1; promoting stress granule formation. Associates (via RG-rich region) with 40S ribosome subunits. Interacts with PABPC1.

The protein resides in the cytoplasm. Its subcellular location is the stress granule. With respect to regulation, under physiological conditions, G3BP2 adopts a compact state that is stabilized by intramolecular interactions between the RG-rich and the acidic regions that inhibit phase separation. Upon stress, polysomes disassemble and mRNAs are released in an unfolded protein-free state. Binding of unfolded mRNA to G3BP2 outcompetes the intramolecular interactions and RNA-bound G3BP2 adopts an expanded conformation in which the RG-rich region becomes exposed to engage in protein-protein and protein-RNA interactions, allowing physical cross-linking of RNA molecules to form protein-RNA condensates, leading to liquid-liquid phase separation (LLPS). In terms of biological role, scaffold protein that plays an essential role in cytoplasmic stress granule formation which acts as a platform for antiviral signaling. Plays an essential role in stress granule formation. Stress granules are membraneless compartments that store mRNAs and proteins, such as stalled translation pre-initiation complexes, in response to stress. Promotes formation of stress granules phase-separated membraneless compartment by undergoing liquid-liquid phase separation (LLPS) upon unfolded RNA-binding: functions as a molecular switch that triggers RNA-dependent LLPS in response to a rise in intracellular free RNA concentrations. In Mus musculus (Mouse), this protein is Ras GTPase-activating protein-binding protein 2 (G3bp2).